We begin with the raw amino-acid sequence, 128 residues long: Fluoride-specific ion channel FluC (128 aa).

A run of 4 helical transmembrane segments spans residues 6–26 (LVALGGAIGSAARFTLSGLVL), 36–56 (LPTFTVNIIGCLVIGMLAGLA), 68–88 (VLLFTGLVGGFTTFSAFGLET), and 99–119 (IAAAYIVSSIVVGLVLMWLGF). Positions 76 and 79 each coordinate Na(+).

It belongs to the fluoride channel Fluc/FEX (TC 1.A.43) family.

The protein resides in the cell inner membrane. The enzyme catalyses fluoride(in) = fluoride(out). With respect to regulation, na(+) is not transported, but it plays an essential structural role and its presence is essential for fluoride channel function. In terms of biological role, fluoride-specific ion channel. Important for reducing fluoride concentration in the cell, thus reducing its toxicity. This is Fluoride-specific ion channel FluC from Methylobacillus flagellatus (strain ATCC 51484 / DSM 6875 / VKM B-1610 / KT).